The primary structure comprises 64 residues: Temporin-ALf (64 aa).

Residues 1-22 form the signal peptide; it reads MFTLKKSLLLLFFLGTINLSLC. The propeptide occupies 23-46; that stretch reads EQERNAEEERRDEPDERNAEVEKR. Leucine 62 carries the post-translational modification Leucine amide.

Expressed by the skin glands.

The protein localises to the secreted. Its function is as follows. Antimicrobial peptide with activity against Gram-positive and Gram-negative bacteria and against fungi. Has been tested against S.aureus (MIC=2.5 ug/mL), B.pumilus (MIC=5.0 ug/mL), B.cereus (MIC=30.0 ug/mL), E.coli (MIC=2.5 ug/mL), B.dysenteriae (MIC=5.0 ug/mL), A.cacoaceticus (MIC=30.0 ug/mL), P.aeruginosa (MIC=5.0 ug/mL) and C.albicans (MIC=2.5 ug/mL). Also shows a weak hemolytic activity. This Amolops loloensis (Lolokou Sucker Frog) protein is Temporin-ALf.